The sequence spans 394 residues: Lipoyl synthase, chloroplastic (394 aa).

The transit peptide at 1-36 directs the protein to the chloroplast; the sequence is MMHHCSITKPTFSISISTQKLHHHSSKFLNLGFRIR. [4Fe-4S] cluster is bound by residues Cys127, Cys132, Cys138, Cys158, Cys162, Cys165, and Ser373. Residues 141–362 enclose the Radical SAM core domain; that stretch reads GGGDGVATAT…KTYGESIGFR (222 aa).

The protein belongs to the radical SAM superfamily. Lipoyl synthase family. [4Fe-4S] cluster serves as cofactor. As to expression, expressed in roots, leaves and flowers.

It is found in the plastid. The protein resides in the chloroplast. It catalyses the reaction [[Fe-S] cluster scaffold protein carrying a second [4Fe-4S](2+) cluster] + N(6)-octanoyl-L-lysyl-[protein] + 2 oxidized [2Fe-2S]-[ferredoxin] + 2 S-adenosyl-L-methionine + 4 H(+) = [[Fe-S] cluster scaffold protein] + N(6)-[(R)-dihydrolipoyl]-L-lysyl-[protein] + 4 Fe(3+) + 2 hydrogen sulfide + 2 5'-deoxyadenosine + 2 L-methionine + 2 reduced [2Fe-2S]-[ferredoxin]. It participates in protein modification; protein lipoylation via endogenous pathway; protein N(6)-(lipoyl)lysine from octanoyl-[acyl-carrier-protein]: step 2/2. Catalyzes the radical-mediated insertion of two sulfur atoms into the C-6 and C-8 positions of the octanoyl moiety bound to the lipoyl domains of lipoate-dependent enzymes, thereby converting the octanoylated domains into lipoylated derivatives. Together with LIP2P and LIP2P2 is essential for de novo plastidial protein lipoylation during seed development. This Arabidopsis thaliana (Mouse-ear cress) protein is Lipoyl synthase, chloroplastic.